The chain runs to 494 residues: UPF0371 protein SpyM3_1021 (494 aa).

It belongs to the UPF0371 family.

The protein is UPF0371 protein SpyM3_1021 of Streptococcus pyogenes serotype M3 (strain ATCC BAA-595 / MGAS315).